A 689-amino-acid polypeptide reads, in one-letter code: MADLEAVLADVSYLMAMEKSKATPAARASKKILLPEPSIRSVMQKYLEDRGEVTFEKIFSQKLGYLLFRDFCLNHLEEARPLVEFYEEIKKYEKLETEEERVARSREIFDSYIMKELLACSHPFSKSATEHVQGHLGKKQVPPDLFQPYIEEICQNLRGDVFQKFIESDKFTRFCQWKNVELNIHLTMNDFSVHRIIGRGGFGEVYGCRKADTGKMYAMKCLDKKRIKMKQGETLALNERIMLSLVSTGDCPFIVCMSYAFHTPDKLSFILDLMNGGDLHYHLSQHGVFSEADMRFYAAEIILGLEHMHNRFVVYRDLKPANILLDEHGHVRISDLGLACDFSKKKPHASVGTHGYMAPEVLQKGVAYDSSADWFSLGCMLFKLLRGHSPFRQHKTKDKHEIDRMTLTMAVELPDSFSPELRSLLEGLLQRDVNRRLGCLGRGAQEVKESPFFRSLDWQMVFLQKYPPPLIPPRGEVNAADAFDIGSFDEEDTKGIKLLDSDQELYRNFPLTISERWQQEVAETVFDTINAETDRLEARKKAKNKQLGHEEDYALGKDCIMHGYMSKMGNPFLTQWQRRYFYLFPNRLEWRGEGEAPQSLLTMEEIQSVEETQIKERKCLLLKIRGGKQFILQCDSDPELVQWKKELRDAYREAQQLVQRVPKMKNKPRSPVVELSKVPLVQRGSANGL.

The tract at residues 1 to 190 (MADLEAVLAD…ELNIHLTMND (190 aa)) is N-terminal. The RGS domain maps to 54-175 (TFEKIFSQKL…IESDKFTRFC (122 aa)). Residues 191–453 (FSVHRIIGRG…AQEVKESPFF (263 aa)) enclose the Protein kinase domain. ATP-binding positions include 197–205 (IGRGGFGEV) and lysine 220. The Proton acceptor role is filled by aspartate 317. The AGC-kinase C-terminal domain occupies 454–521 (RSLDWQMVFL…TISERWQQEV (68 aa)). A PH domain is found at 558 to 652 (DCIMHGYMSK…WKKELRDAYR (95 aa)). Serine 670 carries the post-translational modification Phosphoserine.

Belongs to the protein kinase superfamily. AGC Ser/Thr protein kinase family. GPRK subfamily. As to quaternary structure, interacts with the heterodimer formed by GNB1 and GNG2. Interacts with GIT1. Interacts with, and phosphorylates chemokine-stimulated CCR5. Interacts with ARRB1. Interacts with LPAR1 and LPAR2. Interacts with RALA in response to LPAR1 activation. ADRBK1 and RALA mutually inhibit each other's binding to LPAR1. Interacts with ADRB2. As to expression, expressed in peripheral blood leukocytes.

Its subcellular location is the cytoplasm. The protein localises to the cell membrane. The protein resides in the postsynapse. It is found in the presynapse. It catalyses the reaction [beta-adrenergic receptor] + ATP = [beta-adrenergic receptor]-phosphate + ADP + H(+). Its activity is regulated as follows. In contrast to other AGC family kinases, the catalytic activity is solely regulated by the binding of substrates and ligands, not by phosphorylation of the kinase domain. Specifically phosphorylates the agonist-occupied form of the beta-adrenergic and closely related receptors, probably inducing a desensitization of them. Key regulator of LPAR1 signaling. Competes with RALA for binding to LPAR1 thus affecting the signaling properties of the receptor. Desensitizes LPAR1 and LPAR2 in a phosphorylation-independent manner. Positively regulates ciliary smoothened (SMO)-dependent Hedgehog (Hh) signaling pathway by facilitating the trafficking of SMO into the cilium and the stimulation of SMO activity. Inhibits relaxation of airway smooth muscle in response to blue light. This chain is Beta-adrenergic receptor kinase 1, found in Homo sapiens (Human).